A 163-amino-acid polypeptide reads, in one-letter code: Lipoprotein signal peptidase (163 aa).

A run of 3 helical transmembrane segments spans residues 11 to 31 (ILIA…IATT), 63 to 83 (KMTF…YFFI), and 88 to 108 (YNLF…GNFI). Residues D118 and D136 contribute to the active site. The chain crosses the membrane as a helical span at residues 131–151 (IFNIADSSLTIGVILIIIALL).

It belongs to the peptidase A8 family.

Its subcellular location is the cell membrane. It catalyses the reaction Release of signal peptides from bacterial membrane prolipoproteins. Hydrolyzes -Xaa-Yaa-Zaa-|-(S,diacylglyceryl)Cys-, in which Xaa is hydrophobic (preferably Leu), and Yaa (Ala or Ser) and Zaa (Gly or Ala) have small, neutral side chains.. The protein operates within protein modification; lipoprotein biosynthesis (signal peptide cleavage). This protein specifically catalyzes the removal of signal peptides from prolipoproteins. The protein is Lipoprotein signal peptidase of Staphylococcus aureus (strain Mu3 / ATCC 700698).